The primary structure comprises 25 residues: Xenoposin precursor fragment BM3 (25 aa).

As to expression, expressed by the skin glands.

It is found in the secreted. Its function is as follows. Antimicrobial peptide. This Xenopus boumbaensis (Mawa clawed frog) protein is Xenoposin precursor fragment BM3.